The sequence spans 325 residues: Replication factor C small subunit (325 aa).

54-61 (GPAGTGKT) serves as a coordination point for ATP.

The protein belongs to the activator 1 small subunits family. RfcS subfamily. In terms of assembly, heteromultimer composed of small subunits (RfcS) and large subunits (RfcL).

In terms of biological role, part of the RFC clamp loader complex which loads the PCNA sliding clamp onto DNA. The protein is Replication factor C small subunit of Haloarcula marismortui (strain ATCC 43049 / DSM 3752 / JCM 8966 / VKM B-1809) (Halobacterium marismortui).